A 381-amino-acid polypeptide reads, in one-letter code: Orotidine 5'-phosphate decarboxylase (381 aa).

Residues Asp42, 64 to 66 (KTH), 99 to 108 (DRKFGDIGHT), Tyr333, and Arg352 contribute to the substrate site. Lys101 functions as the Proton donor in the catalytic mechanism. The disordered stretch occupies residues 311-333 (LPPEDEDQQTNGSVGGDGQGQQY).

This sequence belongs to the OMP decarboxylase family.

The catalysed reaction is orotidine 5'-phosphate + H(+) = UMP + CO2. Its pathway is pyrimidine metabolism; UMP biosynthesis via de novo pathway; UMP from orotate: step 2/2. The chain is Orotidine 5'-phosphate decarboxylase (ura3) from Hypocrea jecorina (Trichoderma reesei).